Reading from the N-terminus, the 117-residue chain is Small ribosomal subunit protein uS17 (117 aa).

Residues 97-117 are disordered; sequence AEGLAAAHAGEPETESAATDA.

Belongs to the universal ribosomal protein uS17 family. Part of the 30S ribosomal subunit.

One of the primary rRNA binding proteins, it binds specifically to the 5'-end of 16S ribosomal RNA. The sequence is that of Small ribosomal subunit protein uS17 from Rhodopirellula baltica (strain DSM 10527 / NCIMB 13988 / SH1).